We begin with the raw amino-acid sequence, 55 residues long: Large ribosomal subunit protein bL33B (55 aa).

This sequence belongs to the bacterial ribosomal protein bL33 family.

This Mycobacteroides abscessus (strain ATCC 19977 / DSM 44196 / CCUG 20993 / CIP 104536 / JCM 13569 / NCTC 13031 / TMC 1543 / L948) (Mycobacterium abscessus) protein is Large ribosomal subunit protein bL33B.